We begin with the raw amino-acid sequence, 192 residues long: UPF0149 protein KPK_0755 (192 aa).

The protein belongs to the UPF0149 family.

The chain is UPF0149 protein KPK_0755 from Klebsiella pneumoniae (strain 342).